The sequence spans 156 residues: Small ribosomal subunit protein uS7 (156 aa).

Belongs to the universal ribosomal protein uS7 family. In terms of assembly, part of the 30S ribosomal subunit. Contacts proteins S9 and S11.

One of the primary rRNA binding proteins, it binds directly to 16S rRNA where it nucleates assembly of the head domain of the 30S subunit. Is located at the subunit interface close to the decoding center, probably blocks exit of the E-site tRNA. The chain is Small ribosomal subunit protein uS7 from Nitratiruptor sp. (strain SB155-2).